We begin with the raw amino-acid sequence, 195 residues long: MKIGFLGGSFDPVHFGHLIAAQDAFEQFRLDRLILVPAAQAPLKPNDVQSSPEDRFAMLRAAVEWDQRFEVSDVELRRGGTSYTIDSARYFRKQFPRDELYWIIGGDQLPQLHLWRDVSELGQLVDFIFLERPGFPIKARVDIPGLRLHRCDGHLLAISSTELRDRVKRNLSLDYFVPHKAIVYIREKHLYRPSQ.

This sequence belongs to the NadD family.

The catalysed reaction is nicotinate beta-D-ribonucleotide + ATP + H(+) = deamido-NAD(+) + diphosphate. The protein operates within cofactor biosynthesis; NAD(+) biosynthesis; deamido-NAD(+) from nicotinate D-ribonucleotide: step 1/1. Catalyzes the reversible adenylation of nicotinate mononucleotide (NaMN) to nicotinic acid adenine dinucleotide (NaAD). The protein is Probable nicotinate-nucleotide adenylyltransferase of Opitutus terrae (strain DSM 11246 / JCM 15787 / PB90-1).